The following is a 135-amino-acid chain: Aspartate 1-decarboxylase (135 aa).

The Schiff-base intermediate with substrate; via pyruvic acid role is filled by serine 25. Serine 25 carries the pyruvic acid (Ser) modification. Threonine 57 contacts substrate. Tyrosine 58 (proton donor) is an active-site residue. Residue 73–75 (GAA) participates in substrate binding.

It belongs to the PanD family. Heterooctamer of four alpha and four beta subunits. It depends on pyruvate as a cofactor. Is synthesized initially as an inactive proenzyme, which is activated by self-cleavage at a specific serine bond to produce a beta-subunit with a hydroxyl group at its C-terminus and an alpha-subunit with a pyruvoyl group at its N-terminus.

It is found in the cytoplasm. The catalysed reaction is L-aspartate + H(+) = beta-alanine + CO2. The protein operates within cofactor biosynthesis; (R)-pantothenate biosynthesis; beta-alanine from L-aspartate: step 1/1. Catalyzes the pyruvoyl-dependent decarboxylation of aspartate to produce beta-alanine. This chain is Aspartate 1-decarboxylase, found in Mycolicibacterium vanbaalenii (strain DSM 7251 / JCM 13017 / BCRC 16820 / KCTC 9966 / NRRL B-24157 / PYR-1) (Mycobacterium vanbaalenii).